Reading from the N-terminus, the 147-residue chain is Phage-like element PBSX protein XkdM (147 aa).

This sequence to B.subtilis YqbM.

The sequence is that of Phage-like element PBSX protein XkdM (xkdM) from Bacillus subtilis (strain 168).